We begin with the raw amino-acid sequence, 138 residues long: Acidic phospholipase A2 homolog sistruxin A (138 aa).

An N-terminal signal peptide occupies residues 1 to 37 (MRALWIVAVLLLGVEGSLVEFETLIMKIAGRSGVWYY). Disulfide bonds link Cys42–Cys131, Cys44–Cys60, Cys59–Cys111, Cys65–Cys138, Cys66–Cys104, Cys73–Cys97, and Cys91–Cys102. Residues 78-83 (DVYTYR) constitute a propeptide that is removed on maturation. Residue Gln84 is modified to Pyrrolidone carboxylic acid. A propeptide spanning residues 119-124 (YNHKYW) is cleaved from the precursor.

It belongs to the phospholipase A2 family. Group II subfamily. D49 sub-subfamily. In terms of assembly, heterodimer of an acidic subunit and a basic chain. The acidic subunit is non-toxic, without enzymatic activity and comprises 3 peptides that are cross-linked by 7 disulfide bridges. The basic subunit is toxic, has phospholipase A2 activity and is composed of a single chain. In terms of tissue distribution, expressed by the venom gland.

The protein resides in the secreted. Its function is as follows. Snake venom phospholipase A2 (PLA2) that inhibits neuromuscular transmission by blocking acetylcholine release from the nerve termini. The sequence is that of Acidic phospholipase A2 homolog sistruxin A from Sistrurus tergeminus (Western massasauga).